The chain runs to 476 residues: Rab-3A-interacting protein (476 aa).

Ser163 and Ser165 each carry phosphoserine; by PKB/AKT1. Residues 165-260 (SVLEVREKGY…EVAALKTLVL (96 aa)) adopt a coiled-coil conformation. The disordered stretch occupies residues 262–297 (SSPTSPTQEPLPGGKTPFKKGHTRNKSTSSAMSGSH). Ser263, Ser266, Ser288, and Ser296 each carry phosphoserine. The segment covering 287 to 297 (KSTSSAMSGSH) has biased composition (polar residues). The important for RAB11A binding stretch occupies residues 435–444 (TYIRYIQQGL).

The protein belongs to the SEC2 family. In terms of assembly, homodimer. Interacts with the N-terminal region of SSX2. Interacts with the GDP-bound forms of RAB8A and RAB8B. The interaction with RAB8A is prevented by phosphorylation of RAB8A at 'Thr-72'. Interacts with the GDP-bound forms of RAB3A and RAB3D. Interacts with DCDC1. Interacts (via the N-terminal region) with TRAPPC14; this interaction mediates RAB3IP association with the TRAPP II complex. Forms a heterotetramer with RAB11A where RAB3IP homodimer binds two RAB11A subunits. Forms a complex with RAB11A and RAB11FIP3, probably a heterohexamer with two of each protein subunit, where Rabin8/RAB3IP and RAB11FIP3 simultaneously bind to RAB11A; the complex promotes preciliary trafficking. Forms a complex containing RAB11A, ASAP1, RAB3IP, RAP11FIP3 and ARF4; the complex promotes preciliary trafficking; the complex binds to RHO in photoreceptor cells and promotes RHO ciliary transport. Phosphorylated by AKT1; the phosphorylation alters its GEF activity. As to expression, expressed in brain, kidney, heart, pancreas and placenta. Not detected in skeletal muscle or liver.

It localises to the cytoplasm. The protein resides in the nucleus. The protein localises to the cytoskeleton. It is found in the cell projection. Its subcellular location is the lamellipodium. It localises to the vesicle. The protein resides in the microtubule organizing center. The protein localises to the centrosome. Its activity is regulated as follows. Phosphorylation by ATK1 alters its GEF activity. Complex formation with RAB11A and RAB11FIP3 and ciliogenesis function are competitively inhibited by RAB11A-WDR44 interaction. Guanine nucleotide exchange factor (GEF) which may activate RAB8A and RAB8B. Promotes the exchange of GDP to GTP, converting inactive GDP-bound Rab proteins into their active GTP-bound form. Mediates the release of GDP from RAB8A and RAB8B but not from RAB3A or RAB5. Modulates actin organization and promotes polarized transport of RAB8A-specific vesicles to the cell surface. Together with RAB11A, RAB8A, the exocyst complex, PARD3, PRKCI, ANXA2, CDC42 and DNMBP promotes transcytosis of PODXL to the apical membrane initiation sites (AMIS), apical surface formation and lumenogenesis. Part of the ciliary targeting complex containing Rab11, ASAP1, RAB3IP and RAB11FIP3 and ARF4 that promotes RAB3IP preciliary vesicle trafficking to mother centriole and ciliogenesis initiation. This Homo sapiens (Human) protein is Rab-3A-interacting protein.